The primary structure comprises 199 residues: MITYTKPLSKLIGHFEKFPGIGPRTAQRLALFVLKQPESTIRDFSKALLEAHSNVGRCKKCFNFTSEDECEICKNTERNQKLICVVAETKDLLALERAREFKGVYHVIGGLISPMDSVGPELLEIRSLVERVSKSEIDEIILALTPSVEGDTTSLYIGKLLAPFTKVTRIAYGLPMGSELEYVDEVTLARALEGRTKLN.

The C4-type zinc-finger motif lies at 58 to 73 (CKKCFNFTSEDECEIC). In terms of domain architecture, Toprim spans 81-175 (KLICVVAETK…KVTRIAYGLP (95 aa)).

The protein belongs to the RecR family.

Its function is as follows. May play a role in DNA repair. It seems to be involved in an RecBC-independent recombinational process of DNA repair. It may act with RecF and RecO. This is Recombination protein RecR from Prochlorococcus marinus (strain MIT 9312).